The primary structure comprises 264 residues: H-2 class II histocompatibility antigen, E-Q beta chain (264 aa).

The first 26 residues, 1-26, serve as a signal peptide directing secretion; that stretch reads MVWLPRVPCVAAVILLLTVLSPPVAL. The interval 27 to 121 is beta-1; it reads VRDSRPWFLE…IFDNFLVRRR (95 aa). Residues 27 to 225 are Extracellular-facing; that stretch reads VRDSRPWFLE…KAQSTSAQNK (199 aa). 2 cysteine pairs are disulfide-bonded: Cys-38/Cys-106 and Cys-144/Cys-200. Residue Asn-46 is glycosylated (N-linked (GlcNAc...) asparagine). The interval 122–225 is beta-2; sequence VEPTVTVYPT…KAQSTSAQNK (104 aa). The region spanning 124–214 is the Ig-like C1-type domain; sequence PTVTVYPTKT…PSLTDPVTVE (91 aa). Residues 226-246 traverse the membrane as a helical segment; sequence MLSGVGGFVLGLLFLGAGLFI. The Cytoplasmic portion of the chain corresponds to 247–264; it reads YFRNQKGQSGLQPTGLLS.

It belongs to the MHC class II family.

It is found in the membrane. The sequence is that of H-2 class II histocompatibility antigen, E-Q beta chain from Mus musculus (Mouse).